The primary structure comprises 339 residues: Ketol-acid reductoisomerase (NADP(+)) (339 aa).

The region spanning 1–182 (MRVYYDRDAD…GGGRSGIIET (182 aa)) is the KARI N-terminal Rossmann domain. Residues 24–27 (YGSQ), Lys48, Ser51, Thr53, and 83–86 (DELQ) each bind NADP(+). His108 is a catalytic residue. An NADP(+)-binding site is contributed by Gly134. The KARI C-terminal knotted domain maps to 183-328 (NFKEECETDL…AKLRAMMPWI (146 aa)). Residues Asp191, Glu195, Glu227, and Glu231 each coordinate Mg(2+). Ser252 provides a ligand contact to substrate.

It belongs to the ketol-acid reductoisomerase family. The cofactor is Mg(2+).

It carries out the reaction (2R)-2,3-dihydroxy-3-methylbutanoate + NADP(+) = (2S)-2-acetolactate + NADPH + H(+). The catalysed reaction is (2R,3R)-2,3-dihydroxy-3-methylpentanoate + NADP(+) = (S)-2-ethyl-2-hydroxy-3-oxobutanoate + NADPH + H(+). The protein operates within amino-acid biosynthesis; L-isoleucine biosynthesis; L-isoleucine from 2-oxobutanoate: step 2/4. It participates in amino-acid biosynthesis; L-valine biosynthesis; L-valine from pyruvate: step 2/4. Its function is as follows. Involved in the biosynthesis of branched-chain amino acids (BCAA). Catalyzes an alkyl-migration followed by a ketol-acid reduction of (S)-2-acetolactate (S2AL) to yield (R)-2,3-dihydroxy-isovalerate. In the isomerase reaction, S2AL is rearranged via a Mg-dependent methyl migration to produce 3-hydroxy-3-methyl-2-ketobutyrate (HMKB). In the reductase reaction, this 2-ketoacid undergoes a metal-dependent reduction by NADPH to yield (R)-2,3-dihydroxy-isovalerate. The protein is Ketol-acid reductoisomerase (NADP(+)) of Rhizobium meliloti (strain 1021) (Ensifer meliloti).